We begin with the raw amino-acid sequence, 334 residues long: Ferredoxin--NADP reductase (334 aa).

Asp33, Gln41, Tyr46, Ala86, Phe120, Asp286, and Thr327 together coordinate FAD.

Belongs to the ferredoxin--NADP reductase type 2 family. In terms of assembly, homodimer. It depends on FAD as a cofactor.

The enzyme catalyses 2 reduced [2Fe-2S]-[ferredoxin] + NADP(+) + H(+) = 2 oxidized [2Fe-2S]-[ferredoxin] + NADPH. The polypeptide is Ferredoxin--NADP reductase (Rickettsia akari (strain Hartford)).